A 185-amino-acid polypeptide reads, in one-letter code: Small ribosomal subunit protein bS16 (185 aa).

The interval 83–185 (QWTHGNNPEK…APASEETTEG (103 aa)) is disordered. A compositionally biased stretch (basic and acidic residues) spans 89–125 (NPEKAKPGKKAQERDAERTQRDADRVAAEAQAKEDAK). Low complexity-rich tracts occupy residues 126 to 146 (AAAAEAAEAAAAAAAEAAAAP) and 159 to 176 (VEAAAEEAPAAEAAAEEA).

It belongs to the bacterial ribosomal protein bS16 family.

The sequence is that of Small ribosomal subunit protein bS16 from Caulobacter sp. (strain K31).